We begin with the raw amino-acid sequence, 592 residues long: Aspartate--tRNA(Asp/Asn) ligase (592 aa).

Residue E182 participates in L-aspartate binding. Residues 206-209 (QIFK) form an aspartate region. R228 is a binding site for L-aspartate. ATP contacts are provided by residues 228-230 (RDE) and Q237. Position 455 (H455) interacts with L-aspartate. E489 contacts ATP. R496 is an L-aspartate binding site. 541–544 (GLDR) serves as a coordination point for ATP.

It belongs to the class-II aminoacyl-tRNA synthetase family. Type 1 subfamily. As to quaternary structure, homodimer.

It localises to the cytoplasm. The enzyme catalyses tRNA(Asx) + L-aspartate + ATP = L-aspartyl-tRNA(Asx) + AMP + diphosphate. Its function is as follows. Aspartyl-tRNA synthetase with relaxed tRNA specificity since it is able to aspartylate not only its cognate tRNA(Asp) but also tRNA(Asn). Reaction proceeds in two steps: L-aspartate is first activated by ATP to form Asp-AMP and then transferred to the acceptor end of tRNA(Asp/Asn). The chain is Aspartate--tRNA(Asp/Asn) ligase from Thermoanaerobacter pseudethanolicus (strain ATCC 33223 / 39E) (Clostridium thermohydrosulfuricum).